A 496-amino-acid chain; its full sequence is NADH-quinone oxidoreductase subunit N (496 aa).

The next 14 membrane-spanning stretches (helical) occupy residues 12–32, 43–63, 79–99, 108–128, 132–152, 166–186, 207–227, 257–277, 280–300, 306–326, 333–353, 383–403, 416–436, and 464–484; these read LNLI…IILI, SLYV…TLGL, VSIV…PLAL, SYPE…FMVA, LILI…LIAL, FTMG…IYAL, GLMI…AFKL, VAAF…GVEW, VVIL…ALVQ, MLAY…ALDT, IFFY…MLWM, AVIM…SIFW, GYVW…YYYL, and AVVG…QPLV.

The protein belongs to the complex I subunit 2 family. In terms of assembly, NDH-1 is composed of 14 different subunits. Subunits NuoA, H, J, K, L, M, N constitute the membrane sector of the complex.

It localises to the cell inner membrane. It catalyses the reaction a quinone + NADH + 5 H(+)(in) = a quinol + NAD(+) + 4 H(+)(out). NDH-1 shuttles electrons from NADH, via FMN and iron-sulfur (Fe-S) centers, to quinones in the respiratory chain. The immediate electron acceptor for the enzyme in this species is believed to be ubiquinone. Couples the redox reaction to proton translocation (for every two electrons transferred, four hydrogen ions are translocated across the cytoplasmic membrane), and thus conserves the redox energy in a proton gradient. This Sulfurovum sp. (strain NBC37-1) protein is NADH-quinone oxidoreductase subunit N.